The primary structure comprises 361 residues: tRNA/tmRNA (uracil-C(5))-methyltransferase (361 aa).

Positions 185, 213, 218, 234, and 294 each coordinate S-adenosyl-L-methionine. The active-site Nucleophile is Cys-319. Glu-353 acts as the Proton acceptor in catalysis.

This sequence belongs to the class I-like SAM-binding methyltransferase superfamily. RNA M5U methyltransferase family. TrmA subfamily.

The enzyme catalyses uridine(54) in tRNA + S-adenosyl-L-methionine = 5-methyluridine(54) in tRNA + S-adenosyl-L-homocysteine + H(+). It catalyses the reaction uridine(341) in tmRNA + S-adenosyl-L-methionine = 5-methyluridine(341) in tmRNA + S-adenosyl-L-homocysteine + H(+). In terms of biological role, dual-specificity methyltransferase that catalyzes the formation of 5-methyluridine at position 54 (m5U54) in all tRNAs, and that of position 341 (m5U341) in tmRNA (transfer-mRNA). The sequence is that of tRNA/tmRNA (uracil-C(5))-methyltransferase from Pseudomonas putida (strain GB-1).